The sequence spans 130 residues: ESAT-6 secretion system extracellular protein C (130 aa).

Belongs to the EsxC family.

It localises to the secreted. This Staphylococcus aureus (strain MSSA476) protein is ESAT-6 secretion system extracellular protein C.